The sequence spans 758 residues: Spastin (758 aa).

Positions 1-103 (MVRTKNQSSS…SPRSGHHHSY (103 aa)) are disordered. Residues 1–121 (MVRTKNQSSS…KQNLYVVSFP (121 aa)) lie on the Cytoplasmic side of the membrane. Residues 1–210 (MVRTKNQSSS…RPIQPLEMAA (210 aa)) form a required for localization to punctate cytoplasmic foci region. 4 stretches are compositionally biased toward low complexity: residues 8–28 (SSSS…SSGA), 43–58 (RSSS…AGGS), 66–76 (SSNRRSPGSSP), and 85–95 (TDDLTPTTCSP). The segment at residues 122–142 (IIFLFNVLRSLIYQLFCIFRY) is an intramembrane region (helical). The Cytoplasmic segment spans residues 143-758 (LYGASTKVIY…WSQDYGDITI (616 aa)). Polar residues-rich tracts occupy residues 169–180 (SKEQQQSLNHPS) and 189–198 (QEQQLSNQPQ). Residues 169–202 (SKEQQQSLNHPSELNREGDGQEQQLSNQPQRFRP) are disordered. The sufficient for interaction with microtubules and microtubule severing stretch occupies residues 208–758 (MAANRPGGGY…WSQDYGDITI (551 aa)). The 76-residue stretch at 233–308 (HRRAFEYISK…SMARDRLHFL (76 aa)) folds into the MIT domain. A compositionally biased stretch (basic and acidic residues) spans 323–339 (KEKQKEEARSKPQKSRE). A disordered region spans residues 323-454 (KEKQKEEARS…GPSGSGASTP (132 aa)). Composition is skewed to polar residues over residues 390–406 (NKSQ…TSVG) and 425–454 (QFSS…ASTP). The tract at residues 443-455 (NNGPSGSGASTPV) is required for interaction with microtubules. 523-530 (GPPGNGKT) contributes to the ATP binding site.

It belongs to the AAA ATPase family. Spastin subfamily. In terms of assembly, homohexamer. The homohexamer is stabilized by ATP-binding. The homohexamer may adopt a ring conformation through which microtubules pass prior to being severed. Interacts with microtubules. Interacts with atl; may be involved in microtubule dynamics.

The protein resides in the membrane. Its subcellular location is the cytoplasm. It is found in the cytoskeleton. It localises to the microtubule organizing center. The protein localises to the centrosome. The protein resides in the chromosome. Its subcellular location is the lipid droplet. It carries out the reaction n ATP + n H2O + a microtubule = n ADP + n phosphate + (n+1) alpha/beta tubulin heterodimers.. Functionally, ATP-dependent microtubule severing protein. Stimulates microtubule minus-end depolymerization and poleward microtubule flux in the mitotic spindle. Regulates microtubule stability in the neuromuscular junction synapse. Involved in lipid metabolism by regulating the size and distribution of lipid droplets. Involved in axon regeneration by regulating microtubule severing. In Drosophila simulans (Fruit fly), this protein is Spastin.